The following is a 36-amino-acid chain: Phospholipase A2 hemilipin-2 (36 aa).

The protein belongs to the phospholipase A2 family. Group III subfamily. As to quaternary structure, heterodimer composed of a small subunit and a large subunit; disulfid-linked. Requires Ca(2+) as cofactor. Expressed by the venom gland.

Its subcellular location is the secreted. The catalysed reaction is a 1,2-diacyl-sn-glycero-3-phosphocholine + H2O = a 1-acyl-sn-glycero-3-phosphocholine + a fatty acid + H(+). In terms of biological role, scorpion venom phospholipase A2 (PLA2) that impacts angiogenesis in vitro and in vivo without showing any cytotoxic or apoptotic signs. The antiangiogenic effect is independent from the catalytic activity and seems to be held by its small subunit. PLA2 catalyzes the calcium-dependent hydrolysis of the 2-acyl groups in 3-sn-phosphoglycerides. This is Phospholipase A2 hemilipin-2 from Hemiscorpius lepturus (Scorpion).